Reading from the N-terminus, the 879-residue chain is Protein translocase subunit SecA (879 aa).

Residues glutamine 86, 104–108, and aspartate 500 each bind ATP; that span reads GEGKT. The Zn(2+) site is built by cysteine 863, cysteine 865, cysteine 874, and histidine 875.

The protein belongs to the SecA family. Monomer and homodimer. Part of the essential Sec protein translocation apparatus which comprises SecA, SecYEG and auxiliary proteins SecDF-YajC and YidC. It depends on Zn(2+) as a cofactor.

Its subcellular location is the cell inner membrane. The protein localises to the cytoplasm. The enzyme catalyses ATP + H2O + cellular proteinSide 1 = ADP + phosphate + cellular proteinSide 2.. Functionally, part of the Sec protein translocase complex. Interacts with the SecYEG preprotein conducting channel. Has a central role in coupling the hydrolysis of ATP to the transfer of proteins into and across the cell membrane, serving both as a receptor for the preprotein-SecB complex and as an ATP-driven molecular motor driving the stepwise translocation of polypeptide chains across the membrane. The sequence is that of Protein translocase subunit SecA from Orientia tsutsugamushi (strain Ikeda) (Rickettsia tsutsugamushi).